Consider the following 221-residue polypeptide: Orotate phosphoribosyltransferase (221 aa).

K27 is a 5-phospho-alpha-D-ribose 1-diphosphate binding site. Position 35-36 (35-36 (FF)) interacts with orotate. 5-phospho-alpha-D-ribose 1-diphosphate is bound by residues 75–76 (YK), R102, K103, K106, H108, and 128–136 (DDVLTAGTA). Residues T132 and R160 each coordinate orotate.

Belongs to the purine/pyrimidine phosphoribosyltransferase family. PyrE subfamily. Homodimer. Mg(2+) serves as cofactor.

It catalyses the reaction orotidine 5'-phosphate + diphosphate = orotate + 5-phospho-alpha-D-ribose 1-diphosphate. It participates in pyrimidine metabolism; UMP biosynthesis via de novo pathway; UMP from orotate: step 1/2. Catalyzes the transfer of a ribosyl phosphate group from 5-phosphoribose 1-diphosphate to orotate, leading to the formation of orotidine monophosphate (OMP). The protein is Orotate phosphoribosyltransferase of Dichelobacter nodosus (strain VCS1703A).